Consider the following 1447-residue polypeptide: Bud site selection protein 4 (1447 aa).

Positions 1–16 (MHDAESTVDSLLKEID) are enriched in basic and acidic residues. Disordered stretches follow at residues 1–38 (MHDA…PHNW) and 57–76 (NTRS…KMST). The residue at position 10 (Ser10) is a Phosphoserine. Polar residues-rich tracts occupy residues 22-32 (TKSNITQNGSE) and 59-76 (RSNA…KMST). 5 positions are modified to phosphoserine: Ser78, Ser81, Ser91, Ser96, and Ser167. The tract at residues 272-316 (NLPSKLLNTSNNSHSDSRSPTASVEDLNISTNLPGADSSQNNPVT) is disordered. The span at 277-316 (LLNTSNNSHSDSRSPTASVEDLNISTNLPGADSSQNNPVT) shows a compositional bias: polar residues. At Thr365 the chain carries Phosphothreonine. Ser367 is modified (phosphoserine). A disordered region spans residues 444–479 (HQESEHANEQPAIIPQKDSSEETFTELNNESEFQRN). Ser511 bears the Phosphoserine mark. Residues 529–591 (KTSAEEHDLS…NEEPEHVPLL (63 aa)) are disordered. The span at 538–548 (SSSCEDQSVSE) shows a compositional bias: polar residues. Basic and acidic residues predominate over residues 549–580 (ARNKDRIEEKEVETKDENIETEKDESEYHKVE). Phosphoserine is present on Ser616. Polar residues predominate over residues 648–664 (ANSQFSQQSSITTASTV). A disordered region spans residues 648–673 (ANSQFSQQSSITTASTVDSKKDNGST). Residues 768–879 (EHENIPLSTH…SLWESSYELK (112 aa)) are interaction with IQG1. Phosphoserine occurs at positions 805 and 811. A PH domain is found at 1302-1413 (NIYKEGYLLQ…WYNKLQEVVE (112 aa)).

In terms of assembly, interacts with AXL1, AXL2, IQG1 and SEC3. In terms of processing, phosphorylated by CDC28.

The protein localises to the bud neck. Its function is as follows. Required for establishment of the axial budding pattern in haploid cells. Cooperates with other bud site selection proteins to recognize a spatial landmark during mitosis and they subsequently become a landmark for downstream polarity establishment factors that coordinate axial budding and cytokinesis. Involved in the septin organization at the bud neck. This chain is Bud site selection protein 4 (BUD4), found in Saccharomyces cerevisiae (strain ATCC 204508 / S288c) (Baker's yeast).